The sequence spans 181 residues: 6,7-dimethyl-8-ribityllumazine synthase (181 aa).

5-amino-6-(D-ribitylamino)uracil is bound by residues Tyr-27, 58 to 60, and 87 to 89; these read ALE and CVI. Position 92-93 (92-93) interacts with (2S)-2-hydroxy-3-oxobutyl phosphate; sequence ET. The Proton donor role is filled by His-95. Asn-120 contributes to the 5-amino-6-(D-ribitylamino)uracil binding site. Arg-134 contacts (2S)-2-hydroxy-3-oxobutyl phosphate.

Belongs to the DMRL synthase family.

The enzyme catalyses (2S)-2-hydroxy-3-oxobutyl phosphate + 5-amino-6-(D-ribitylamino)uracil = 6,7-dimethyl-8-(1-D-ribityl)lumazine + phosphate + 2 H2O + H(+). Its pathway is cofactor biosynthesis; riboflavin biosynthesis; riboflavin from 2-hydroxy-3-oxobutyl phosphate and 5-amino-6-(D-ribitylamino)uracil: step 1/2. Functionally, catalyzes the formation of 6,7-dimethyl-8-ribityllumazine by condensation of 5-amino-6-(D-ribitylamino)uracil with 3,4-dihydroxy-2-butanone 4-phosphate. This is the penultimate step in the biosynthesis of riboflavin. This Methylobacterium nodulans (strain LMG 21967 / CNCM I-2342 / ORS 2060) protein is 6,7-dimethyl-8-ribityllumazine synthase.